A 514-amino-acid polypeptide reads, in one-letter code: Maturase K (514 aa).

Belongs to the intron maturase 2 family. MatK subfamily.

It localises to the plastid. Its subcellular location is the chloroplast. Its function is as follows. Usually encoded in the trnK tRNA gene intron. Probably assists in splicing its own and other chloroplast group II introns. This Encephalartos altensteinii (Altenstein's bread tree) protein is Maturase K.